A 477-amino-acid polypeptide reads, in one-letter code: MMITQDFTKPIDSATVLQKIVLDKAQWVKAKEKEFPLSQFKQNIQNSDRSFYDALAKGTHQKPAYILECKKASPSKGLIRAEFNLEEIANVYKHYASAVSVLTDEKYFQGNFEFLPLVRDIVSQPVLCKDFMISEYQVYLARYYQVDAILLMLSVVNDETYRVLADLAHSLGMGVLTETSNEEEFERALALGAKIIGVNNRNLHDLTVDLNRVVELTKKYADCIPADVRIISESGIYNHKQIHQLQKVAHGFLIGSSLMGNQDLNNAVRSVIFGENKVCGLTRAQDVKIVYENGALYGGLIFAEHSKRSVSLRQAQELVTAAPLRFVGVFQNQEIDFIVKIASQLQLYAVQLHGAETEAFITALRQQLPKNTQIWKAISVNTEAQSAVDFTDDLNVDRYIFDSQTANQQGGTGKTFDWSLIPENLKHKIILAGGISPNNVEQAIAQGCLGLDLNSGVESSAGVKDQEKVRLVFNNIY.

The interval Ser-13–Glu-275 is indole-3-glycerol phosphate synthase. Residues Asn-276–Tyr-477 are N-(5'-phosphoribosyl)anthranilate isomerase.

In the N-terminal section; belongs to the TrpC family. It in the C-terminal section; belongs to the TrpF family. In terms of assembly, monomer.

It catalyses the reaction N-(5-phospho-beta-D-ribosyl)anthranilate = 1-(2-carboxyphenylamino)-1-deoxy-D-ribulose 5-phosphate. It carries out the reaction 1-(2-carboxyphenylamino)-1-deoxy-D-ribulose 5-phosphate + H(+) = (1S,2R)-1-C-(indol-3-yl)glycerol 3-phosphate + CO2 + H2O. Its pathway is amino-acid biosynthesis; L-tryptophan biosynthesis; L-tryptophan from chorismate: step 3/5. It participates in amino-acid biosynthesis; L-tryptophan biosynthesis; L-tryptophan from chorismate: step 4/5. Functionally, bifunctional enzyme that catalyzes two sequential steps of tryptophan biosynthetic pathway. The first reaction is catalyzed by the isomerase, coded by the TrpF domain; the second reaction is catalyzed by the synthase, coded by the TrpC domain. This Haemophilus influenzae (strain ATCC 51907 / DSM 11121 / KW20 / Rd) protein is Tryptophan biosynthesis protein TrpCF (trpC).